Consider the following 196-residue polypeptide: Probable malonic semialdehyde reductase RutE (196 aa).

The protein belongs to the nitroreductase family. HadB/RutE subfamily. FMN serves as cofactor.

The enzyme catalyses 3-hydroxypropanoate + NADP(+) = 3-oxopropanoate + NADPH + H(+). In terms of biological role, may reduce toxic product malonic semialdehyde to 3-hydroxypropionic acid, which is excreted. The chain is Probable malonic semialdehyde reductase RutE from Klebsiella pneumoniae subsp. pneumoniae (strain ATCC 700721 / MGH 78578).